The primary structure comprises 374 residues: MAAPPRPAPSPPAPRRLDTSDVLQQIMAITDQSLDEAQARKHALNCHRMKPALFSVLCEIKEKTVVSIRGIQDEDPPDAQLLRLDNMLLAEGVCRPEKRGRGGAVARAGTATPGGCPNDNSIEHSDYRAKLSQIRQIYHSELEKYEQACREFTTHVTNLLQEQSRMRPVSPKEIERMVGAIHGKFSAIQMQLKQSTCEAVMTLRSRLLDARRKRRNFSKQATEVLNEYFYSHLNNPYPSEEAKEELARKGGLTISQVSNWFGNKRIRYKKNMGKFQEEATIYTGKTAVDTTEVGVPGNHASCLSTPSSGSSGPFPLPSAGDAFLTLRTLASLQPPPGGGCLQSQAQGSWQGATPQPATASPAGDPGSINSSTSN.

The PBC domain occupies 14-209; it reads PRRLDTSDVL…VMTLRSRLLD (196 aa). Residues 21–100 are PBC-A; the sequence is DVLQQIMAIT…EGVCRPEKRG (80 aa). Positions 103–209 are PBC-B; the sequence is GAVARAGTAT…VMTLRSRLLD (107 aa). Residues 210–272 constitute a DNA-binding region (homeobox; TALE-type); the sequence is ARRKRRNFSK…NKRIRYKKNM (63 aa). The interval 333–374 is disordered; that stretch reads QPPPGGGCLQSQAQGSWQGATPQPATASPAGDPGSINSSTSN. The span at 341-358 shows a compositional bias: polar residues; it reads LQSQAQGSWQGATPQPAT.

This sequence belongs to the TALE/PBX homeobox family.

It is found in the nucleus. The polypeptide is Pre-B-cell leukemia transcription factor 4 (PBX4) (Homo sapiens (Human)).